Reading from the N-terminus, the 273-residue chain is SKA complex subunit 1 homolog (273 aa).

Residues 77–97 adopt a coiled-coil conformation; sequence KKLVQRSLKEEEKLQHMLANL.

The protein belongs to the SKA1 family.

This chain is SKA complex subunit 1 homolog, found in Zea mays (Maize).